The chain runs to 338 residues: Glycerol-3-phosphate dehydrogenase [NAD(P)+] (338 aa).

NADPH-binding residues include Trp-11, Arg-30, and Lys-107. Positions 107, 140, and 142 each coordinate sn-glycerol 3-phosphate. An NADPH-binding site is contributed by Ala-144. 5 residues coordinate sn-glycerol 3-phosphate: Lys-195, Asp-248, Ser-258, Arg-259, and Asn-260. Lys-195 serves as the catalytic Proton acceptor. NADPH is bound at residue Arg-259. Residues Val-283 and Glu-285 each contribute to the NADPH site.

It belongs to the NAD-dependent glycerol-3-phosphate dehydrogenase family.

Its subcellular location is the cytoplasm. The enzyme catalyses sn-glycerol 3-phosphate + NAD(+) = dihydroxyacetone phosphate + NADH + H(+). The catalysed reaction is sn-glycerol 3-phosphate + NADP(+) = dihydroxyacetone phosphate + NADPH + H(+). It functions in the pathway membrane lipid metabolism; glycerophospholipid metabolism. Catalyzes the reduction of the glycolytic intermediate dihydroxyacetone phosphate (DHAP) to sn-glycerol 3-phosphate (G3P), the key precursor for phospholipid synthesis. This chain is Glycerol-3-phosphate dehydrogenase [NAD(P)+], found in Ralstonia nicotianae (strain ATCC BAA-1114 / GMI1000) (Ralstonia solanacearum).